Consider the following 166-residue polypeptide: Endoribonuclease YbeY (166 aa).

Zn(2+) contacts are provided by H111, H115, and H121. The disordered stretch occupies residues 141–166 (LGYPDPYAEDESADHPHSDTPSKDHE). Positions 153–166 (ADHPHSDTPSKDHE) are enriched in basic and acidic residues.

This sequence belongs to the endoribonuclease YbeY family. The cofactor is Zn(2+).

The protein resides in the cytoplasm. Single strand-specific metallo-endoribonuclease involved in late-stage 70S ribosome quality control and in maturation of the 3' terminus of the 16S rRNA. This is Endoribonuclease YbeY from Pseudomonas savastanoi pv. phaseolicola (strain 1448A / Race 6) (Pseudomonas syringae pv. phaseolicola (strain 1448A / Race 6)).